The chain runs to 284 residues: 2-dehydro-3-deoxyphosphooctonate aldolase (284 aa).

This sequence belongs to the KdsA family.

The protein localises to the cytoplasm. The enzyme catalyses D-arabinose 5-phosphate + phosphoenolpyruvate + H2O = 3-deoxy-alpha-D-manno-2-octulosonate-8-phosphate + phosphate. The protein operates within carbohydrate biosynthesis; 3-deoxy-D-manno-octulosonate biosynthesis; 3-deoxy-D-manno-octulosonate from D-ribulose 5-phosphate: step 2/3. It functions in the pathway bacterial outer membrane biogenesis; lipopolysaccharide biosynthesis. This is 2-dehydro-3-deoxyphosphooctonate aldolase from Cronobacter sakazakii (strain ATCC BAA-894) (Enterobacter sakazakii).